A 179-amino-acid polypeptide reads, in one-letter code: Peptidyl-tRNA hydrolase (179 aa).

TRNA is bound at residue Y14. H19 acts as the Proton acceptor in catalysis. Positions 60, 62, and 108 each coordinate tRNA.

The protein belongs to the PTH family. In terms of assembly, monomer.

It localises to the cytoplasm. It carries out the reaction an N-acyl-L-alpha-aminoacyl-tRNA + H2O = an N-acyl-L-amino acid + a tRNA + H(+). Functionally, hydrolyzes ribosome-free peptidyl-tRNAs (with 1 or more amino acids incorporated), which drop off the ribosome during protein synthesis, or as a result of ribosome stalling. In terms of biological role, catalyzes the release of premature peptidyl moieties from peptidyl-tRNA molecules trapped in stalled 50S ribosomal subunits, and thus maintains levels of free tRNAs and 50S ribosomes. The polypeptide is Peptidyl-tRNA hydrolase (Mycoplasma mobile (strain ATCC 43663 / 163K / NCTC 11711) (Mesomycoplasma mobile)).